The chain runs to 103 residues: Large ribosomal subunit protein bL21 (103 aa).

Belongs to the bacterial ribosomal protein bL21 family. Part of the 50S ribosomal subunit. Contacts protein L20.

This protein binds to 23S rRNA in the presence of protein L20. In Idiomarina loihiensis (strain ATCC BAA-735 / DSM 15497 / L2-TR), this protein is Large ribosomal subunit protein bL21.